The primary structure comprises 1210 residues: Disease resistance-like protein DSC2 (1210 aa).

Residues 59–223 (WTHQVFPSFR…KVAKDVSDVL (165 aa)) form the TIR domain. The active site involves glutamate 134. Residues 241–511 (ITRINSLLCL…CLFNGCQVNH (271 aa)) form the NB-ARC domain. 9 LRR repeats span residues 662 to 685 (AKFL…IQPL), 686 to 709 (KNLK…SNAT), 711 to 732 (LESL…IRGT), 756 to 780 (ATSL…LPGD), 783 to 804 (MRSL…PEIS), 805 to 828 (TNIQ…RLWS), 830 to 848 (LDKL…PPVP), 849 to 873 (DGIS…NLSQ), and 940 to 970 (LPEL…NLSQ).

This sequence belongs to the disease resistance NB-LRR family. As to quaternary structure, interacts with DSC1.

The catalysed reaction is NAD(+) + H2O = ADP-D-ribose + nicotinamide + H(+). In terms of biological role, TIR-NB-LRR receptor-like protein involved in plant defense. Acts as a trigger of hypersensitive response (HR). Functions as a guard of CAMTA3, a negative regulator of immunity, during pathogen infection. The chain is Disease resistance-like protein DSC2 from Arabidopsis thaliana (Mouse-ear cress).